The sequence spans 185 residues: Elongation factor P (185 aa).

Belongs to the elongation factor P family.

The protein resides in the cytoplasm. Its pathway is protein biosynthesis; polypeptide chain elongation. Involved in peptide bond synthesis. Stimulates efficient translation and peptide-bond synthesis on native or reconstituted 70S ribosomes in vitro. Probably functions indirectly by altering the affinity of the ribosome for aminoacyl-tRNA, thus increasing their reactivity as acceptors for peptidyl transferase. This Gloeothece citriformis (strain PCC 7424) (Cyanothece sp. (strain PCC 7424)) protein is Elongation factor P.